The sequence spans 439 residues: Xylose isomerase (439 aa).

Catalysis depends on residues His101 and Asp104. Glu232, Glu268, His271, Asp296, Asp307, Asp309, and Asp339 together coordinate Mg(2+).

This sequence belongs to the xylose isomerase family. In terms of assembly, homotetramer. It depends on Mg(2+) as a cofactor.

It localises to the cytoplasm. The enzyme catalyses alpha-D-xylose = alpha-D-xylulofuranose. The sequence is that of Xylose isomerase from Histophilus somni (strain 2336) (Haemophilus somnus).